The chain runs to 314 residues: Ribosome production factor 2 homolog (314 aa).

Residues 28-238 form the Brix domain; that stretch reads KKTLILHGTK…IRRNRLPNDS (211 aa). The segment at 238-314 is disordered; sequence SLMKEAMRTS…VAKKMKVSSE (77 aa). Composition is skewed to basic and acidic residues over residues 239 to 249 and 275 to 314; these read LMKEAMRTSKD and QKLK…VSSE.

It belongs to the RPF2 family.

It localises to the nucleus. The protein localises to the nucleolus. This is Ribosome production factor 2 homolog from Arabidopsis thaliana (Mouse-ear cress).